Consider the following 853-residue polypeptide: Penicillin-binding protein 1A (853 aa).

The Cytoplasmic segment spans residues 1-6 (MRIAKL). The chain crosses the membrane as a helical; Signal-anchor for type II membrane protein span at residues 7–27 (ILNTLLTLCILGLVAGGMLYF). The Periplasmic portion of the chain corresponds to 28–853 (HLKSELQQPM…TPATQPQELF (826 aa)). Positions 37–205 (MQIYTADGKL…STMNPLYSLK (169 aa)) are transglycosylase. E75 (proton donor; for transglycosylase activity) is an active-site residue. The interval 387-681 (QRANGEWQLG…RVISGELAFL (295 aa)) is transpeptidase. S441 functions as the Acyl-ester intermediate; for transpeptidase activity in the catalytic mechanism. The tract at residues 615 to 636 (NALKPTDDSTNGEELDQQPETV) is disordered.

It in the N-terminal section; belongs to the glycosyltransferase 51 family. The protein in the C-terminal section; belongs to the transpeptidase family.

It localises to the cell inner membrane. It carries out the reaction [GlcNAc-(1-&gt;4)-Mur2Ac(oyl-L-Ala-gamma-D-Glu-L-Lys-D-Ala-D-Ala)](n)-di-trans,octa-cis-undecaprenyl diphosphate + beta-D-GlcNAc-(1-&gt;4)-Mur2Ac(oyl-L-Ala-gamma-D-Glu-L-Lys-D-Ala-D-Ala)-di-trans,octa-cis-undecaprenyl diphosphate = [GlcNAc-(1-&gt;4)-Mur2Ac(oyl-L-Ala-gamma-D-Glu-L-Lys-D-Ala-D-Ala)](n+1)-di-trans,octa-cis-undecaprenyl diphosphate + di-trans,octa-cis-undecaprenyl diphosphate + H(+). The catalysed reaction is Preferential cleavage: (Ac)2-L-Lys-D-Ala-|-D-Ala. Also transpeptidation of peptidyl-alanyl moieties that are N-acyl substituents of D-alanine.. It functions in the pathway cell wall biogenesis; peptidoglycan biosynthesis. Cell wall formation. Synthesis of cross-linked peptidoglycan from the lipid intermediates. The enzyme has a penicillin-insensitive transglycosylase N-terminal domain (formation of linear glycan strands) and a penicillin-sensitive transpeptidase C-terminal domain (cross-linking of the peptide subunits). This Haemophilus influenzae (strain ATCC 51907 / DSM 11121 / KW20 / Rd) protein is Penicillin-binding protein 1A (mrcA).